Consider the following 124-residue polypeptide: S-adenosylmethionine decarboxylase proenzyme (124 aa).

Ser63 serves as the catalytic Schiff-base intermediate with substrate; via pyruvic acid. Ser63 carries the post-translational modification Pyruvic acid (Ser); by autocatalysis. His68 functions as the Proton acceptor; for processing activity in the catalytic mechanism. Cys83 (proton donor; for catalytic activity) is an active-site residue.

This sequence belongs to the prokaryotic AdoMetDC family. Type 1 subfamily. As to quaternary structure, heterotetramer of two alpha and two beta chains arranged as a dimer of alpha/beta heterodimers. It depends on pyruvate as a cofactor. In terms of processing, is synthesized initially as an inactive proenzyme. Formation of the active enzyme involves a self-maturation process in which the active site pyruvoyl group is generated from an internal serine residue via an autocatalytic post-translational modification. Two non-identical subunits are generated from the proenzyme in this reaction, and the pyruvate is formed at the N-terminus of the alpha chain, which is derived from the carboxyl end of the proenzyme. The post-translation cleavage follows an unusual pathway, termed non-hydrolytic serinolysis, in which the side chain hydroxyl group of the serine supplies its oxygen atom to form the C-terminus of the beta chain, while the remainder of the serine residue undergoes an oxidative deamination to produce ammonia and the pyruvoyl group blocking the N-terminus of the alpha chain.

The catalysed reaction is S-adenosyl-L-methionine + H(+) = S-adenosyl 3-(methylsulfanyl)propylamine + CO2. It functions in the pathway amine and polyamine biosynthesis; S-adenosylmethioninamine biosynthesis; S-adenosylmethioninamine from S-adenosyl-L-methionine: step 1/1. Catalyzes the decarboxylation of S-adenosylmethionine to S-adenosylmethioninamine (dcAdoMet), the propylamine donor required for the synthesis of the polyamines spermine and spermidine from the diamine putrescine. In Geobacillus kaustophilus (strain HTA426), this protein is S-adenosylmethionine decarboxylase proenzyme.